We begin with the raw amino-acid sequence, 449 residues long: Ktr system potassium uptake protein D (449 aa).

Transmembrane regions (helical) follow at residues 17 to 37, 46 to 66, 75 to 95, 133 to 153, 194 to 214, 235 to 255, 297 to 317, 355 to 375, 380 to 400, and 411 to 431; these read LIAL…SLPA, TFID…LTVV, IGIF…MTLG, VLFL…TYFL, FVQF…PVLV, ITTI…FALE, LFFI…GGGI, LVVT…LTIT, LLEL…SLGI, and VIMI…YLIG.

It belongs to the TrkH potassium transport family. Ktr (TC 2.A.38.4) subfamily. As to quaternary structure, homodimer. Part of the KtrCD complex formed by an octameric catalytic ring of KtrC and a membrane associated dimer of KtrD forming a potassium channel.

The protein localises to the cell membrane. Its function is as follows. Integral membrane subunit of the KtrCD potassium uptake transporter. The 2 major potassium transporter complexes KtrAB and KtrCD confer resistance to both suddenly imposed and prolonged osmotic stress. The sequence is that of Ktr system potassium uptake protein D (ktrD) from Bacillus subtilis (strain 168).